The following is a 375-amino-acid chain: Succinyl-diaminopimelate desuccinylase (375 aa).

Histidine 66 provides a ligand contact to Zn(2+). Residue aspartate 68 is part of the active site. Aspartate 99 serves as a coordination point for Zn(2+). Glutamate 133 functions as the Proton acceptor in the catalytic mechanism. Zn(2+) is bound by residues glutamate 134, glutamate 162, and histidine 348.

This sequence belongs to the peptidase M20A family. DapE subfamily. As to quaternary structure, homodimer. Zn(2+) serves as cofactor. Co(2+) is required as a cofactor.

It catalyses the reaction N-succinyl-(2S,6S)-2,6-diaminopimelate + H2O = (2S,6S)-2,6-diaminopimelate + succinate. It participates in amino-acid biosynthesis; L-lysine biosynthesis via DAP pathway; LL-2,6-diaminopimelate from (S)-tetrahydrodipicolinate (succinylase route): step 3/3. In terms of biological role, catalyzes the hydrolysis of N-succinyl-L,L-diaminopimelic acid (SDAP), forming succinate and LL-2,6-diaminopimelate (DAP), an intermediate involved in the bacterial biosynthesis of lysine and meso-diaminopimelic acid, an essential component of bacterial cell walls. This is Succinyl-diaminopimelate desuccinylase from Buchnera aphidicola subsp. Acyrthosiphon pisum (strain APS) (Acyrthosiphon pisum symbiotic bacterium).